A 499-amino-acid polypeptide reads, in one-letter code: tRNA (guanine(37)-N(1))-methyltransferase (499 aa).

The N-terminal 44 residues, 1–44 (MKIALPVFQKFNRLISSCKMSGVFPYNPPVNRQMRELDRSFFIT), are a transit peptide targeting the mitochondrion. S-adenosyl-L-methionine contacts are provided by residues His268, 307 to 308 (DL), 335 to 336 (DG), and Asn399.

It belongs to the class I-like SAM-binding methyltransferase superfamily. TRM5/TYW2 family. In terms of assembly, monomer.

The protein localises to the mitochondrion matrix. It is found in the nucleus. It localises to the cytoplasm. It catalyses the reaction guanosine(37) in tRNA + S-adenosyl-L-methionine = N(1)-methylguanosine(37) in tRNA + S-adenosyl-L-homocysteine + H(+). Functionally, specifically methylates the N1 position of guanosine-37 in various cytoplasmic and mitochondrial tRNAs. Methylation is not dependent on the nature of the nucleoside 5' of the target nucleoside. This is the first step in the biosynthesis of wybutosine (yW), a modified base adjacent to the anticodon of tRNAs and required for accurate decoding. Postspliced cytoplasmic tRNAs are imported into the nucleus, where this first step seems to take place, after which they are reexported to the cytoplasm, where the yW sythesis is completed by cytoplasmic enzymes. In Saccharomyces cerevisiae (strain ATCC 204508 / S288c) (Baker's yeast), this protein is tRNA (guanine(37)-N(1))-methyltransferase.